The sequence spans 631 residues: MBT domain-containing protein 1 (631 aa).

Residues 1–31 form a disordered region; it reads MFDGYDSCSEDTSSSSSSEESEEEVAPLPSN. The FCS-type zinc finger occupies 45–80; that stretch reads PDGKSGMATCEMCGMVGVRDAFYSKTKRFCSVSCSR. Zn(2+) is bound by residues cysteine 54, cysteine 57, cysteine 74, and cysteine 78. Lysine 115 bears the N6-acetyllysine mark. 4 MBT repeats span residues 144–248, 256–353, 354–459, and 467–563; these read FSWG…LVPP, TNWK…IGHR, FKRS…LTPP, and FKWF…LQPP. The tract at residues 563–631 is disordered; that stretch reads PASQSSRESQ…SATVYIKQEP (69 aa). Residues 564–576 are compositionally biased toward low complexity; the sequence is ASQSSRESQSASS. Residues 577–593 show a composition bias toward basic residues; the sequence is KQKKKAKSQQYKGHKKM.

In terms of assembly, monomer. Component of the NuA4 histone acetyltransferase complex. Interacts with EPC1; interaction is direct and promotes recruitment of MBTD1 into the NuA4 histone acetyltransferase complex.

The protein resides in the nucleus. It localises to the chromosome. In terms of biological role, chromatin reader component of the NuA4 histone acetyltransferase complex, a multiprotein complex involved in transcriptional activation of select genes principally by acetylation of nucleosomal histones H4 and H2A. The NuA4 complex plays a direct role in repair of DNA double-strand breaks (DSBs) by promoting homologous recombination (HR). MBTD1 specifically recognizes and binds monomethylated and dimethylated 'Lys-20' on histone H4 (H4K20me1 and H4K20me2, respectively). In the NuA4 complex, MBTD1 promotes recruitment of the complex to H4K20me marks by competing with TP53BP1 for binding to H4K20me. Following recruitment to H4K20me at DNA breaks, the NuA4 complex catalyzes acetylation of 'Lys-15' on histone H2A (H2AK15), blocking the ubiquitination mark required for TP53BP1 localization at DNA breaks, thereby promoting homologous recombination (HR). This is MBT domain-containing protein 1 from Mus musculus (Mouse).